We begin with the raw amino-acid sequence, 348 residues long: Histidinol-phosphate aminotransferase (348 aa).

Lysine 210 is modified (N6-(pyridoxal phosphate)lysine).

The protein belongs to the class-II pyridoxal-phosphate-dependent aminotransferase family. Histidinol-phosphate aminotransferase subfamily. Homodimer. Requires pyridoxal 5'-phosphate as cofactor.

It catalyses the reaction L-histidinol phosphate + 2-oxoglutarate = 3-(imidazol-4-yl)-2-oxopropyl phosphate + L-glutamate. It participates in amino-acid biosynthesis; L-histidine biosynthesis; L-histidine from 5-phospho-alpha-D-ribose 1-diphosphate: step 7/9. The chain is Histidinol-phosphate aminotransferase from Pseudomonas putida (strain W619).